A 456-amino-acid chain; its full sequence is Protein shifted (456 aa).

The first 30 residues, Met-1–Cys-30, serve as a signal peptide directing secretion. Residues His-34 to Asn-112 are disordered. The segment covering Arg-44–His-55 has biased composition (basic and acidic residues). Residue Asn-57 is glycosylated (N-linked (GlcNAc...) asparagine). The segment covering His-77–Gln-87 has biased composition (basic residues). A compositionally biased stretch (gly residues) spans Gln-88–Ser-107. The 143-residue stretch at Leu-119–Cys-261 folds into the WIF domain. N-linked (GlcNAc...) asparagine glycans are attached at residues Asn-173, Asn-217, and Asn-227. Cystine bridges form between Cys-224–Cys-261, Cys-283–Cys-293, Cys-287–Cys-299, Cys-301–Cys-310, Cys-315–Cys-325, Cys-319–Cys-331, Cys-333–Cys-342, Cys-347–Cys-357, Cys-351–Cys-363, Cys-365–Cys-374, Cys-379–Cys-389, Cys-383–Cys-395, Cys-397–Cys-406, Cys-416–Cys-423, Cys-418–Cys-429, and Cys-431–Cys-440. 5 consecutive EGF-like domains span residues Thr-279–Glu-311, Cys-315–Cys-342, Glu-343–Glu-375, Tyr-376–Glu-407, and Gln-412–Asn-441. Asn-324 carries an N-linked (GlcNAc...) asparagine glycan. N-linked (GlcNAc...) asparagine glycosylation occurs at Asn-420.

As to quaternary structure, interacts with hh. As to expression, at the blastoderm stage, it is ubiquitously expressed. As embryogenesis continues, it is expressed in the epidermis and central nervous system, this expression being segmentally modulated. Also highly expressed at the foregut and hindgut throughout embryogenesis. In third instar wing imaginal disks, it is highly expressed in the most anterior and posterior parts of the disk and weakly expressed at the antero/posterior (A/P) compartment border. In the leg disks and the antenna part of the eye-antennal imaginal disk it is also weakly expressed at the A/P compartment border. Weakly expressed in the morphogenetic furrow in the eye primordium.

The protein resides in the secreted. It is found in the extracellular space. The protein localises to the extracellular matrix. In terms of biological role, required for normal accumulation and movement of lipid-modified hedgehog (hh) morphogen. May act by stabilizing the interaction between heparan sulfate proteoglycans (HSPGs) and hh, HSPGs being required for diffusion of hh morphogen. Not involved in wingless (wg) morphogen movement, suggesting that it may provide HSPG specificity for Hh. The protein is Protein shifted (shf) of Drosophila melanogaster (Fruit fly).